The primary structure comprises 49 residues: Peridinin-chlorophyll a-binding protein (49 aa).

In terms of assembly, monomer. Post-translationally, binds 12 peridinin and 2 chlorophyll a molecules per monomer.

It is found in the plastid. It localises to the chloroplast. Functionally, water-soluble antenna for capture of solar energy in the blue-green range. Peridinin is an asymmetric carotenoid. The chain is Peridinin-chlorophyll a-binding protein from Alexandrium cohorticula (Dinoflagellate).